A 419-amino-acid chain; its full sequence is Creatine kinase S-type, mitochondrial (419 aa).

A mitochondrion-targeting transit peptide spans 1 to 39 (MAGTFGRLLAGRVTAALFAAAGSGVLTTGYLLNQQNVKA). Residues 46–132 (KLFPPSADYP…FDPVIKARHN (87 aa)) enclose the Phosphagen kinase N-terminal domain. Residues 159-401 (YVLSSRVRTG…NYLVDCEKKL (243 aa)) enclose the Phosphagen kinase C-terminal domain. Residues 162–166 (SSRVR), His225, Arg270, Arg326, 354–359 (RGTGGV), and Asp369 contribute to the ATP site.

Belongs to the ATP:guanido phosphotransferase family. In terms of assembly, exists as an octamer composed of four MTCK homodimers. Expressed in the leg muscle and heart.

It is found in the mitochondrion inner membrane. The enzyme catalyses creatine + ATP = N-phosphocreatine + ADP + H(+). Functionally, reversibly catalyzes the transfer of phosphate between ATP and various phosphogens (e.g. creatine phosphate). Creatine kinase isoenzymes play a central role in energy transduction in tissues with large, fluctuating energy demands, such as skeletal muscle, heart, brain and spermatozoa. This is Creatine kinase S-type, mitochondrial (CKMT2) from Gallus gallus (Chicken).